We begin with the raw amino-acid sequence, 582 residues long: SHC-transforming protein 2 (582 aa).

Disordered regions lie at residues 1–24 (MTQG…APTT) and 47–70 (GPAA…AGPG). Residues 8–20 (RAPPAPPAPPEPE) are compositionally biased toward pro residues. A PID domain is found at 147–329 (LGPGVSYVVR…AGPEESAWGD (183 aa)). Residues 330–486 (EEDSLEHNYY…PTEEQLRQEP (157 aa)) are CH1. Phosphotyrosine is present on residues Tyr338, Tyr339, and Tyr414. Residues 460–481 (PLEDQWPSPPTRRAPVAPTEEQ) are disordered. In terms of domain architecture, SH2 spans 487 to 578 (WYHGRMSRRA…ESELHLRGVV (92 aa)).

Interacts with the Trk receptors in a phosphotyrosine-dependent manner and MEGF12. Once activated, binds to GRB2. Phosphorylated on tyrosines by the Trk receptors. As to expression, expressed in brain. Expressed at high level in the hypothalamus and at low level in the caudate nucleus.

Its function is as follows. Signaling adapter that couples activated growth factor receptors to signaling pathway in neurons. Involved in the signal transduction pathways of neurotrophin-activated Trk receptors in cortical neurons. The protein is SHC-transforming protein 2 (SHC2) of Homo sapiens (Human).